Consider the following 359-residue polypeptide: MAGCGEIDHSVNMLPTNRKANESCANPAPSLTVPECAICLQTCVHPVSLPCKHVFCYLCVKGASWLGKRCALCRQEIPEDFLDKPTLLSPEELKAASRGNGEYAWYYEGRNGWWQYDERTSRELEDAFSKGKKSTEMLIAGFLYVADLENMVQYRRNEHGRRRKIKRDIIDIPKKGVAGLRLDCEANTVNLARESSADGADSVSAQSGASSVQPLVSSLRPLTSVDGQLTSPATPSPDASTSLEDSFAHLQLSGDSIAERSHRGEGEEDHESPSSGRVPAPDTSVEETESDASSDSEDVSALVAQHSLTQQRLLVPNANQTVSDRSDRSGIDRSVAGGGTVNAGVRSRRPDGQCTVTEV.

Residues 36 to 74 (CAICLQTCVHPVSLPCKHVFCYLCVKGASWLGKRCALCR) form an RING-type zinc finger. Glycyl lysine isopeptide (Lys-Gly) (interchain with G-Cter in ubiquitin) cross-links involve residues Lys-84 and Lys-94. The WWE domain occupies 91 to 167 (EELKAASRGN…EHGRRRKIKR (77 aa)). A glycoprotein contacts are provided by Tyr-107, Arg-110, and Trp-114. A Glycyl lysine isopeptide (Lys-Gly) (interchain with G-Cter in ubiquitin) cross-link involves residue Lys-130. Residues Tyr-144, Gln-153, Arg-163, and Lys-175 each coordinate a glycoprotein. Residue Lys-175 forms a Glycyl lysine isopeptide (Lys-Gly) (interchain with G-Cter in ubiquitin) linkage. The interval 259–359 (ERSHRGEGEE…PDGQCTVTEV (101 aa)) is disordered. Positions 284 to 298 (SVEETESDASSDSED) are enriched in acidic residues. A phosphoserine mark is found at Ser-290 and Ser-294. Residues 306–322 (HSLTQQRLLVPNANQTV) are compositionally biased toward polar residues.

As to quaternary structure, can form homooligomers. Interacts with PARsylated AXIN1, AXIN2, BLZF1, CASC3, H1-2, IPO7, LIG3, NCL, PARP1, XRCC1, XRCC5 and XRCC6. Interacts with DDB1, DHX15, IQGAP1, LRPPRC, PARP2, PRKDC, RUVBL2, TNKS1 and TNKS2. Binding often leads to interactor ubiquitination, in the presence of the appropriate E1 and E2 enzymes, and proteasomal degradation. Ubiquitinated; autoubiquitinated. Autoubiquitination is enhanced upon poly(ADP-ribose)-binding.

It is found in the cytoplasm. It localises to the cytosol. The protein localises to the nucleus. The catalysed reaction is S-ubiquitinyl-[E2 ubiquitin-conjugating enzyme]-L-cysteine + [acceptor protein]-L-lysine = [E2 ubiquitin-conjugating enzyme]-L-cysteine + N(6)-ubiquitinyl-[acceptor protein]-L-lysine.. It functions in the pathway protein modification; protein ubiquitination. Functionally, E3 ubiquitin-protein ligase that specifically binds poly-ADP-ribosylated (PARsylated) proteins and mediates their ubiquitination and subsequent degradation. May regulate many important biological processes, such as cell survival and DNA damage response. Acts as an activator of the Wnt signaling pathway by mediating the ubiquitination of PARsylated AXIN1 and AXIN2, 2 key components of the beta-catenin destruction complex. Acts in cooperation with tankyrase proteins (TNKS and TNKS2), which mediate PARsylation of target proteins AXIN1, AXIN2, BLZF1, CASC3, TNKS and TNKS2. Recognizes and binds tankyrase-dependent PARsylated proteins via its WWE domain and mediates their ubiquitination, leading to their degradation. Different ubiquitin linkage types have been observed: TNKS2 undergoes ubiquitination at 'Lys-48' and 'Lys-63', while AXIN1 is only ubiquitinated at 'Lys-48'. May regulate TNKS and TNKS2 subcellular location, preventing aggregation at a centrosomal location. Neuroprotective protein. Protects the brain against N-methyl-D-aspartate (NMDA) receptor-mediated glutamate excitotoxicity and ischemia, by interfering with PAR-induced cell death, called parthanatos. Prevents nuclear translocation of AIFM1 in a PAR-binding dependent manner. Does not affect PARP1 activation. Protects against cell death induced by DNA damaging agents, such as N-methyl-N-nitro-N-nitrosoguanidine (MNNG) and rescues cells from G1 arrest. Promotes cell survival after gamma-irradiation. Facilitates DNA repair. The protein is E3 ubiquitin-protein ligase RNF146 (RNF146) of Ailuropoda melanoleuca (Giant panda).